The following is a 655-amino-acid chain: MFKKLHMKIAVFVSIMLIITVVLLMLSSYLTLKPMITEDGKNTTQNVTQSLEQNIELQLKSYAISLSRLANGELTHTFVTKPSKEASRLFHDDIKQIKDNDDYVAMAYIGTAKKEMFTYPKADFAEDYDPTSRPWYKLAAETPDQVVWTEPYKDVVTGDMIVTASKAILDRQKVIGVASYDLKLSAIQSMVNKQKVPYKGFAFLADASGNLLAHPSNQGKNISKDQTLQTIASEKKGIQDVNGKMVVYQTIGETGWKVGTQFDTDQLMWISDKMNRANLWISLIALIITIILSYFLAKTITGPIQQLIVKTKAVSAGDLTVRAESKSKDEVGILTRDFNLMVENMKEMVEQVRLSSGKVSDTSEQLTAVAAETNETSGQIAKAIEEVAAGASEQASEVETINEKSESLSTKIRQIAEEAGGIKERSKSSEDASYKGLDALGQLLMKSNEANMETKKVETMLLDLENQTKNIEEVVTAISNISDQTNLLALNASIEAARAGESGRGFAVVADEVRKLAEQSALSTKHISETVKLIQLETKEASHAMVEASRMNDEQNSAIHETGEVLNTITAEMQSLVQGIDHIYAEIQRMSEEQLAISEAIQSISAISQESAAAAEEVNASTDEQLVTLDKVKHSTETLKHASQELMNTIAKFTL.

The Cytoplasmic segment spans residues 1–8 (MFKKLHMK). Residues 9 to 29 (IAVFVSIMLIITVVLLMLSSY) form a helical membrane-spanning segment. At 30 to 276 (LTLKPMITED…LMWISDKMNR (247 aa)) the chain is on the extracellular side. Residues 148–225 (WTEPYKDVVT…SNQGKNISKD (78 aa)) form the Cache domain. Residues 277 to 297 (ANLWISLIALIITIILSYFLA) form a helical membrane-spanning segment. An HAMP domain is found at 298–350 (KTITGPIQQLIVKTKAVSAGDLTVRAESKSKDEVGILTRDFNLMVENMKEMVE). Residues 298–655 (KTITGPIQQL…LMNTIAKFTL (358 aa)) lie on the Cytoplasmic side of the membrane. A Methyl-accepting transducer domain is found at 369–619 (VAAETNETSG…ESAAAAEEVN (251 aa)).

The protein belongs to the methyl-accepting chemotaxis (MCP) protein family. In terms of assembly, interacts with FloT. Post-translationally, some glutamine residues are deamidated to glutamate by CheD and subsequently methylated.

It is found in the cell membrane. The protein resides in the membrane raft. Chemotactic-signal transducers respond to changes in the concentration of attractants and repellents in the environment, transduce a signal from the outside to the inside of the cell, and facilitate sensory adaptation through the variation of the level of methylation. All amino acids serve as attractants in B.subtilis, they appear to cause an increase in the turnover methyl groups, leading to methylation of an unidentified acceptor, while repellents have been shown to cause a decrease in methyl group turnover. The methyl groups are added by a methyltransferase and removed by a methylesterase. McpC is required for taxis to cysteine, proline, threonine, glycine, serine, lysine, valine and arginine and for aspartate, glutamine, histidine and glutamate. Primarily mediates response to positive stimulus of PTS carbohydrates. Greatly influences the duration or magnitude of the response to negative PTS carbohydrate stimulus. This Bacillus subtilis (strain 168) protein is Methyl-accepting chemotaxis protein McpC (mcpC).